The sequence spans 192 residues: Ion-translocating oxidoreductase complex subunit B (192 aa).

The interval 1–26 (MNTIWIAVGALALLGLVFGAILGYAS) is hydrophobic. The 4Fe-4S domain occupies 32 to 91 (EDDPVVEKIDAILPQSQCGQCGYPGCRPYAEAVGLQGEKINRCAPGGEAVMLKIAELLNV). The [4Fe-4S] cluster site is built by cysteine 49, cysteine 52, cysteine 57, cysteine 74, cysteine 117, cysteine 120, cysteine 123, cysteine 127, cysteine 147, cysteine 150, cysteine 153, and cysteine 157. 4Fe-4S ferredoxin-type domains are found at residues 108-137 (MLAVIDENNCIGCTKCIQACPVDAIVGATR) and 138-167 (AMHTVMSDLCTGCNLCVDPCPTHCIELRPV).

This sequence belongs to the 4Fe4S bacterial-type ferredoxin family. RnfB subfamily. As to quaternary structure, the complex is composed of six subunits: RsxA, RsxB, RsxC, RsxD, RsxE and RsxG. The cofactor is [4Fe-4S] cluster.

The protein resides in the cell inner membrane. Its function is as follows. Part of a membrane-bound complex that couples electron transfer with translocation of ions across the membrane. Required to maintain the reduced state of SoxR. This Salmonella newport (strain SL254) protein is Ion-translocating oxidoreductase complex subunit B.